A 325-amino-acid polypeptide reads, in one-letter code: Gibberellin 20-oxidase-like protein (325 aa).

In terms of domain architecture, Fe2OG dioxygenase spans 152–266 (CHGYFRINNY…RFSLAFFWCF (115 aa)). His186, Asp188, and His244 together coordinate Fe cation. Arg257 is a binding site for 2-oxoglutarate.

This sequence belongs to the iron/ascorbate-dependent oxidoreductase family. GA20OX subfamily. The cofactor is Fe(2+). As to expression, highly expressed in elongation zone of lateral roots.

Negative regulator of root hair growth. The sequence is that of Gibberellin 20-oxidase-like protein from Arabidopsis thaliana (Mouse-ear cress).